We begin with the raw amino-acid sequence, 390 residues long: MLSREDFYMIKQMRQQGAYIVDIATQIGCSERTVRRYLKYPEPPARKTRHKMVKLKPFMDYIDMRLAENVWNSEVIFAEIKAMGYTGGRSMLRYYIQPKRKMRPSKRTVRFETQPRYQLQHDWGEVEVEVAGQRCKVNFAVNTLGFSRRFHVFAAPKQDAEHTYESLVRAFRYFGGCVKTVLVDNQKAAVLKNNNGKVVFNSGFLLLADHYNFLPRACRPRRARTKGKVERMVKYLKENFFVRYRRFDSFTHVNQQLEQWIADVADKRELRQFKETPEQRFALEQEHLQPLPDTDFDTSYFDIRHVSWDSYIEVGGNRYSVPEALCGQPVSIRISLDDELRIYSNEKLVASHRLCSASSGWQTVPEHHAPLWQQVSQVEHRPLSAYEELL.

An HTH IS21-type domain is found at 5–66; sequence EDFYMIKQMR…PFMDYIDMRL (62 aa). Residues 20–39 constitute a DNA-binding region (H-T-H motif); it reads IVDIATQIGCSERTVRRYLK. One can recognise an Integrase catalytic domain in the interval 111–285; the sequence is FETQPRYQLQ…TPEQRFALEQ (175 aa).

Belongs to the transposase IS21/IS408/IS1162 family.

Functionally, involved in the transposition of the insertion sequence. The protein is Transposase for insertion sequence element IS21 (istA) of Pseudomonas aeruginosa.